The chain runs to 345 residues: Protein TRIGALACTOSYLDIACYLGLYCEROL 3, chloroplastic (345 aa).

A chloroplast-targeting transit peptide spans 1–46 (MLSLSCSSSSSSLLPPSLHYHGSSSVQSIVVPRRSLISFRRKVSCC). The 252-residue stretch at 85 to 336 (IECRDVYKSF…TNPIVQQFAT (252 aa)) folds into the ABC transporter domain. Residue 117-124 (GPSGTGKS) coordinates ATP.

This sequence belongs to the ABC transporter superfamily. ABCI family. As to quaternary structure, catalytic subunit of the TGD complex, a lipid translocator at the inner chloroplast envelope membrane made of TGD1, TGD2 and TGD3. Interacts with TGD1 and TGD2 with an overall subunit stoichiometry of 2 TGD1, 2 TGD3 and 8 to 12 TGD2. Interacts with TGD5.

It is found in the plastid. The protein localises to the chloroplast stroma. In terms of biological role, ATPase transporter involved in lipid transfer from the endoplasmic reticulum (ER) to plastids, and necessary for thylakoids formation. Not involved in transition metal transport pathways. The polypeptide is Protein TRIGALACTOSYLDIACYLGLYCEROL 3, chloroplastic (Arabidopsis thaliana (Mouse-ear cress)).